The primary structure comprises 148 residues: uncharacterized protein (148 aa).

One can recognise an N-acetyltransferase domain in the interval L7–R148.

This is an uncharacterized protein from Staphylococcus aureus (strain Mu50 / ATCC 700699).